The chain runs to 519 residues: Nitrogen fixation regulatory protein (519 aa).

Residues 23 to 93 (LPEIFRQTVE…QALWGRLAQK (71 aa)) enclose the PAS 1 domain. Residues 94-148 (KPWSGVLVNRRKDKTLYLAELTVAPVLNEAGETIYYLGMHRDTSELHELEQRVNN) enclose the PAC domain. A PAS 2 domain is found at 151–217 (LMIEAVVNAA…FETLENQGSA (67 aa)). The region spanning 302–517 (AAIHRLQGPV…RIVVELPFSA (216 aa)) is the Histidine kinase domain. Phosphohistidine; by autocatalysis is present on His305.

It depends on FAD as a cofactor.

It catalyses the reaction ATP + protein L-histidine = ADP + protein N-phospho-L-histidine.. Functionally, required for the inhibition of NifA activity in response to oxygen and low level of fixed nitrogen. This is Nitrogen fixation regulatory protein (nifL) from Azotobacter vinelandii.